The chain runs to 219 residues: tRNA (guanine-N(7)-)-methyltransferase (219 aa).

The S-adenosyl-L-methionine site is built by E46, E71, N100, and D122. The active site involves D122. Residues K126, D158, and 199-202 (TEYE) each bind substrate.

The protein belongs to the class I-like SAM-binding methyltransferase superfamily. TrmB family.

The catalysed reaction is guanosine(46) in tRNA + S-adenosyl-L-methionine = N(7)-methylguanosine(46) in tRNA + S-adenosyl-L-homocysteine. It functions in the pathway tRNA modification; N(7)-methylguanine-tRNA biosynthesis. Catalyzes the formation of N(7)-methylguanine at position 46 (m7G46) in tRNA. This Leuconostoc mesenteroides subsp. mesenteroides (strain ATCC 8293 / DSM 20343 / BCRC 11652 / CCM 1803 / JCM 6124 / NCDO 523 / NBRC 100496 / NCIMB 8023 / NCTC 12954 / NRRL B-1118 / 37Y) protein is tRNA (guanine-N(7)-)-methyltransferase.